Consider the following 199-residue polypeptide: Small ribosomal subunit protein uS2 (199 aa).

The protein belongs to the universal ribosomal protein uS2 family.

This Thermoplasma acidophilum (strain ATCC 25905 / DSM 1728 / JCM 9062 / NBRC 15155 / AMRC-C165) protein is Small ribosomal subunit protein uS2 (rps2).